Here is an 83-residue protein sequence, read N- to C-terminus: Exodeoxyribonuclease 7 small subunit (83 aa).

This sequence belongs to the XseB family. As to quaternary structure, heterooligomer composed of large and small subunits.

Its subcellular location is the cytoplasm. The catalysed reaction is Exonucleolytic cleavage in either 5'- to 3'- or 3'- to 5'-direction to yield nucleoside 5'-phosphates.. Bidirectionally degrades single-stranded DNA into large acid-insoluble oligonucleotides, which are then degraded further into small acid-soluble oligonucleotides. This is Exodeoxyribonuclease 7 small subunit from Rhizobium rhizogenes (strain K84 / ATCC BAA-868) (Agrobacterium radiobacter).